The following is a 212-amino-acid chain: V-type ATP synthase subunit E (212 aa).

This sequence belongs to the V-ATPase E subunit family.

In terms of biological role, produces ATP from ADP in the presence of a proton gradient across the membrane. The chain is V-type ATP synthase subunit E from Nitrosococcus oceani (strain ATCC 19707 / BCRC 17464 / JCM 30415 / NCIMB 11848 / C-107).